The sequence spans 276 residues: uncharacterized protein (276 aa).

One can recognise an AB hydrolase-1 domain in the interval 20–137 (PVLIFIPGAN…PPINTFLPDS (118 aa)). The interval 57–76 (GESELTEPLPDSASNPDSDY) is disordered.

The protein belongs to the AB hydrolase superfamily.

This is an uncharacterized protein from Staphylococcus aureus (strain N315).